A 193-amino-acid chain; its full sequence is Orotate phosphoribosyltransferase (193 aa).

5-phospho-alpha-D-ribose 1-diphosphate is bound by residues arginine 85, lysine 89, and 111–119 (DDVLTTGKS). The orotate site is built by threonine 115 and arginine 143.

This sequence belongs to the purine/pyrimidine phosphoribosyltransferase family. PyrE subfamily. In terms of assembly, homodimer. It depends on Mg(2+) as a cofactor.

It carries out the reaction orotidine 5'-phosphate + diphosphate = orotate + 5-phospho-alpha-D-ribose 1-diphosphate. It functions in the pathway pyrimidine metabolism; UMP biosynthesis via de novo pathway; UMP from orotate: step 1/2. Catalyzes the transfer of a ribosyl phosphate group from 5-phosphoribose 1-diphosphate to orotate, leading to the formation of orotidine monophosphate (OMP). This chain is Orotate phosphoribosyltransferase, found in Pyrobaculum aerophilum (strain ATCC 51768 / DSM 7523 / JCM 9630 / CIP 104966 / NBRC 100827 / IM2).